A 195-amino-acid chain; its full sequence is Segregation and condensation protein B (195 aa).

The disordered stretch occupies residues 169–195; sequence LEDVAASQENSREAGGRGSIPGHPGEE.

Belongs to the ScpB family. As to quaternary structure, homodimer. Homodimerization may be required to stabilize the binding of ScpA to the Smc head domains. Component of a cohesin-like complex composed of ScpA, ScpB and the Smc homodimer, in which ScpA and ScpB bind to the head domain of Smc. The presence of the three proteins is required for the association of the complex with DNA.

It localises to the cytoplasm. Participates in chromosomal partition during cell division. May act via the formation of a condensin-like complex containing Smc and ScpA that pull DNA away from mid-cell into both cell halves. The sequence is that of Segregation and condensation protein B from Moorella thermoacetica (strain ATCC 39073 / JCM 9320).